Reading from the N-terminus, the 90-residue chain is HssA/B-like protein 4 (90 aa).

This sequence belongs to the hssA/B family.

This Dictyostelium discoideum (Social amoeba) protein is HssA/B-like protein 4 (hssl4).